A 283-amino-acid chain; its full sequence is MARRPRAPAASGEEFSFVSPLVKYLLFFFNMLFWVISMVMVAVGVYARLMKHAEAALACLAVDPAILLIVVGVLMFLLTFCGCIGSLRENICLLQTFSLCLTAVFLLQLAAGILGFVFSDKARGKVSEIINNAIVHYRDDLDLQNLIDFGQKKFSCCGGISYKDWSQNMYFNCSEDNPSRERCSVPYSCCLPTPDQAVINTMCGQGMQAFDYLEASKVIYTNGCIDKLVNWIHSNLFLLGGVALGLAIPQLVGILLSQILVNQIKDQIKLQLYNQQHRADPWY.

Topologically, residues Met1–Tyr24 are cytoplasmic. A helical transmembrane segment spans residues Leu25–Val45. Residues Tyr46 to Pro64 are Extracellular-facing. The chain crosses the membrane as a helical span at residues Ala65 to Gly85. At Ser86–Thr96 the chain is on the cytoplasmic side. Residues Phe97–Val117 form a helical membrane-spanning segment. Residues Phe118–Asn235 lie on the Extracellular side of the membrane. Disulfide bonds link Cys156/Cys224, Cys157/Cys189, Cys173/Cys183, and Cys190/Cys203. A glycan (N-linked (GlcNAc...) asparagine) is linked at Asn172. A helical membrane pass occupies residues Leu236–Leu256. Residues Ser257–Tyr283 are Cytoplasmic-facing.

Belongs to the tetraspanin (TM4SF) family. In terms of assembly, homodimer; disulfide-linked. Interacts (via extracellular domain) with ADAM10 (via extracellular domain). Interacts (via cytoplasmic domain) with PLEKHA7 (via WW domains); the interaction is dependent on PDZD11 being bound to PLEKHA7 and facilitates the docking of ADAM10 to zonula adherens. As to expression, predominantly expressed in erythroblasts.

The protein resides in the cell membrane. It localises to the cell junction. It is found in the adherens junction. The protein localises to the cytoplasm. Part of TspanC8 subgroup, composed of 6 members that interact with the transmembrane metalloprotease ADAM10. This interaction is required for ADAM10 exit from the endoplasmic reticulum and for enzymatic maturation and trafficking to the cell surface as well as substrate specificity. Different TspanC8/ADAM10 complexes have distinct substrates. Plays an important role in normal erythropoiesis. It has a role in the differentiation of erythroid progenitors. Negatively regulates ligand-induced Notch activity probably by regulating ADAM10 activity. Mediates docking of ADAM10 to zonula adherens by interacting with ADAM10 and, in a PDZD11-dependent manner, with the zonula adherens protein PLEKHA7. The protein is Tetraspanin-33 of Homo sapiens (Human).